Reading from the N-terminus, the 512-residue chain is mRNA export factor (512 aa).

The disordered stretch occupies residues 1–242 (MATDIDMLID…PVPERKAPSA (242 aa)). Residues 5–17 (IDMLIDLGLDLSD) carry the Nuclear export signal motif. Ser16 and Ser18 each carry phosphoserine; by host. 2 stretches are compositionally biased toward acidic residues: residues 16-28 (SDSELEEDALERD) and 36-55 (PESDSSGECSSSDEDMEDPC). The interaction with host ALYREF stretch occupies residues 104-112 (VWSRLGTRR). Positions 110 to 138 (TRRSASPREPHGGKVARIQPPSTKAPHPR) match the Nuclear localization signal motif. A Phosphoserine; by host modification is found at Ser113. The segment covering 135 to 149 (PHPRGGRRGRRRGRG) has biased composition (basic residues). Arg138 is subject to Dimethylated arginine; by host. Residues 138–152 (RGGRRGRRRGRGRYG) are RGG-box. Arg148 carries the omega-N-methylarginine; by host modification. Position 150 is a dimethylated arginine; by host (Arg150). A compositionally biased stretch (basic and acidic residues) spans 228 to 240 (ADGRAPVPERKAP). Positions 400, 479, 483, and 488 each coordinate Zn(2+). The segment at 400–488 (CYLKARGLCG…HRQECSSRVC (89 aa)) adopts a CHC2-type zinc-finger fold.

It belongs to the HHV-1 ICP27 protein family. Interacts with host RBP1; this interaction facilitates the RNA polymerase recruitment to viral transcription sites. Interacts (via the RGG box) with host ALYREF/THOC4; this interaction recruits ALYREF to viral replication compartments and probably directs viral mRNA to the TAP/NFX1 pathway. Interacts (via the RGG box) with host SRPK1; this interaction relocalizes SRPK1 to the nucleus and seems to alter its activity. Interacts with ICP4; this interaction modulates ICP4 DNA-binding activity. Interacts with host NXF1; this interaction allows efficient export of HSV-1 early and late transcripts. Interacts with host IRF3; this interaction inhibits IRF3 phosphorylation and nuclear translocation. Methylated within the RGG box possibly by host PRMT1. When hypomethylated, ICP27 is exported to the cytoplasm earlier and more rapidly. Post-translationally, phosphorylated.

It is found in the host cytoplasm. Its subcellular location is the host nucleus. Multifunctional regulator of the expression of viral genes that contributes to the shutoff of host protein synthesis and mediates nuclear export of viral intronless mRNAs. Also stimulates translation of viral transcripts. Independently, plays a role in the regulation of virion release. Also plays a role in the inhibition of host innate immune response by targeting host IRF3 and thereby preventing production of beta-interferon. Silences the 3' splice site of the host promyelocytic leukemia (PML) intron 7a, thereby switching PML isoforms from PML-II to PML-V. This could be linked to the accelerated mRNA export induced by ICP27 which might not provide sufficient time for PML pre-mRNA to be spliced in the nucleus. Also suppresses splicing of the viral ICP34.5 mRNA, allowing the virus to express a variant form of ICP34.5. In Human herpesvirus 2 (strain HG52) (HHV-2), this protein is mRNA export factor.